The chain runs to 54 residues: MLYYALVFLIVAIIAGVLGFGGIAGASAGIAQVLFFLFLIFLVISLVAGLIRRT.

Transmembrane regions (helical) follow at residues 5–25 (ALVF…GIAG) and 30–50 (IAQV…VAGL).

This sequence belongs to the UPF0391 family.

The protein resides in the cell membrane. The protein is UPF0391 membrane protein R00741 of Rhizobium meliloti (strain 1021) (Ensifer meliloti).